A 429-amino-acid chain; its full sequence is MKKQRNLRSMAAQAVEQVVEQGQSLSNILPPLQQKVSDKDKALLQELCFGVLRTLSQLDWLINKLMARPMTGKQRTVHYLIMVGLYQLLYTRIPPHAALAETVEGAIAIKRPQLKGLINGVLRQFQRQQEELLAKFNASDARYLHPSWLLKRLQKAYPEQWQSIVEANNQRPPMWLRVNRTHHSRDSWLALLDEAGMKGFPHADYPDAVRLETPAPVHALPGFEDGWVTVQDASAQGCMTWLAPQNGEHILDLCAAPGGKTTHILEVAPEAQVVAVDIDEQRLSRVYDNLKRLGMKATVKQGDGRYPSQWCGEQQFDRILLDAPCSATGVIRRHPDIKWLRRDRDIPELAQLQSEILDAIWPHLKSGGTLVYATCSVLPEENSLQIKAFLQRTADAELCETGTPEQPGKQNLPGAEEGDGFFYAKLIKK.

S-adenosyl-L-methionine contacts are provided by residues 254–260 (CAAPGGK), D277, D303, and D322. The active-site Nucleophile is C375.

It belongs to the class I-like SAM-binding methyltransferase superfamily. RsmB/NOP family.

It is found in the cytoplasm. It carries out the reaction cytidine(967) in 16S rRNA + S-adenosyl-L-methionine = 5-methylcytidine(967) in 16S rRNA + S-adenosyl-L-homocysteine + H(+). Specifically methylates the cytosine at position 967 (m5C967) of 16S rRNA. This chain is Ribosomal RNA small subunit methyltransferase B, found in Shigella boydii serotype 4 (strain Sb227).